Here is a 393-residue protein sequence, read N- to C-terminus: Phosphoglycerate kinase (393 aa).

Substrate-binding positions include 21-23 (DLN), Arg-36, 59-62 (HLGR), Arg-113, and Arg-146. Residues Lys-197, Glu-319, and 345-348 (GGDT) each bind ATP.

This sequence belongs to the phosphoglycerate kinase family. Monomer.

It is found in the cytoplasm. It catalyses the reaction (2R)-3-phosphoglycerate + ATP = (2R)-3-phospho-glyceroyl phosphate + ADP. It participates in carbohydrate degradation; glycolysis; pyruvate from D-glyceraldehyde 3-phosphate: step 2/5. The polypeptide is Phosphoglycerate kinase (Nitratidesulfovibrio vulgaris (strain ATCC 29579 / DSM 644 / CCUG 34227 / NCIMB 8303 / VKM B-1760 / Hildenborough) (Desulfovibrio vulgaris)).